We begin with the raw amino-acid sequence, 159 residues long: UPF0225 protein plu2503 (159 aa).

Belongs to the UPF0225 family.

This chain is UPF0225 protein plu2503, found in Photorhabdus laumondii subsp. laumondii (strain DSM 15139 / CIP 105565 / TT01) (Photorhabdus luminescens subsp. laumondii).